The chain runs to 96 residues: Small ribosomal subunit protein bS18 (96 aa).

Residues 1-22 (MYKDVDSHQRDSRSDGHQDGFK) are compositionally biased toward basic and acidic residues. The interval 1–25 (MYKDVDSHQRDSRSDGHQDGFKKNP) is disordered.

This sequence belongs to the bacterial ribosomal protein bS18 family. As to quaternary structure, part of the 30S ribosomal subunit. Forms a tight heterodimer with protein bS6.

Its function is as follows. Binds as a heterodimer with protein bS6 to the central domain of the 16S rRNA, where it helps stabilize the platform of the 30S subunit. In Borrelia hermsii (strain HS1 / DAH), this protein is Small ribosomal subunit protein bS18.